Here is a 594-residue protein sequence, read N- to C-terminus: Cytosolic Fe-S cluster assembly factor NAR1 (594 aa).

Cys-20, Cys-88, Cys-91, Cys-94, Cys-209, and Cys-264 together coordinate [4Fe-4S] cluster. Residues 444–465 (RRARMSKSEDSSGASASSMAPA) are disordered. Residues 454–465 (SSGASASSMAPA) are compositionally biased toward low complexity. Cys-481 and Cys-485 together coordinate [4Fe-4S] cluster. The segment at 492 to 511 (IAAPAPTSTPPAAPAPAHAA) is disordered.

This sequence belongs to the NARF family.

Component of the cytosolic Fe/S protein assembly machinery. Required for maturation of extramitochondrial Fe/S proteins. May play a role in the transfer of pre-assembled Fe/S clusters to target apoproteins. The sequence is that of Cytosolic Fe-S cluster assembly factor NAR1 (NAR1) from Lodderomyces elongisporus (strain ATCC 11503 / CBS 2605 / JCM 1781 / NBRC 1676 / NRRL YB-4239) (Yeast).